The sequence spans 581 residues: Transcription factor GTE2 (581 aa).

The tract at residues 130–153 is disordered; sequence VKKTKTKKKKIGHGQKRSNPFATD. A compositionally biased stretch (basic residues) spans 131–145; sequence KKTKTKKKKIGHGQK. The region spanning 169 to 275 is the Bromo domain; the sequence is KVLKSMMTTC…SQFDVWFNPT (107 aa). Disordered stretches follow at residues 329 to 399 and 470 to 581; these read PLLP…KREM and KRQG…KEAP. The segment covering 346 to 365 has biased composition (pro residues); sequence PSPPPSPVQPPPPPSPPPQP. An NET domain is found at 389-470; sequence PKAKDPNKRE…NYRKMASKIK (82 aa). Basic and acidic residues-rich tracts occupy residues 390-399 and 493-503; these read KAKDPNKREM and SAEKRGRKGGE. The span at 504–517 shows a compositional bias: acidic residues; sequence AGEEDVDIGEDIPV. Low complexity predominate over residues 530–564; that stretch reads TAAAASGGSSSSGSFSSSGSSSSSDSESGSSSGSD.

It is found in the nucleus. This chain is Transcription factor GTE2 (GTE2), found in Arabidopsis thaliana (Mouse-ear cress).